A 154-amino-acid chain; its full sequence is MSEDIYQNLKQLGGETRIPASPEEAELERVANPQADVAYNVRFTAPEFTSLCPMTGQPDFAHLVIDYVPGPWLVESKSLKLFLTSFRNHGAFHEDCTISIARRLVDFLDPQWLRIGGYWYPRGGIPIDVFWQSGTIPEGVWIPDQGVPPYRGRG.

Cysteine 52 serves as the catalytic Thioimide intermediate. The Proton donor role is filled by aspartate 59. Substrate contacts are provided by residues 74–76 (VES) and 93–94 (HE).

This sequence belongs to the GTP cyclohydrolase I family. QueF type 1 subfamily.

It is found in the cytoplasm. The enzyme catalyses 7-aminomethyl-7-carbaguanine + 2 NADP(+) = 7-cyano-7-deazaguanine + 2 NADPH + 3 H(+). The protein operates within tRNA modification; tRNA-queuosine biosynthesis. Functionally, catalyzes the NADPH-dependent reduction of 7-cyano-7-deazaguanine (preQ0) to 7-aminomethyl-7-deazaguanine (preQ1). This Ruegeria sp. (strain TM1040) (Silicibacter sp.) protein is NADPH-dependent 7-cyano-7-deazaguanine reductase.